Reading from the N-terminus, the 434-residue chain is Tryptophan synthase beta chain (434 aa).

N6-(pyridoxal phosphate)lysine is present on Lys92. A disordered region spans residues 411 to 434 (VKGGVATSPESFDASGAKGAGSQS).

It belongs to the TrpB family. Tetramer of two alpha and two beta chains. Requires pyridoxal 5'-phosphate as cofactor.

It catalyses the reaction (1S,2R)-1-C-(indol-3-yl)glycerol 3-phosphate + L-serine = D-glyceraldehyde 3-phosphate + L-tryptophan + H2O. Its pathway is amino-acid biosynthesis; L-tryptophan biosynthesis; L-tryptophan from chorismate: step 5/5. The beta subunit is responsible for the synthesis of L-tryptophan from indole and L-serine. This chain is Tryptophan synthase beta chain, found in Polaromonas naphthalenivorans (strain CJ2).